The chain runs to 217 residues: Polyadenylate-binding protein 3 (217 aa).

The disordered stretch occupies residues 1–28 (MEEEEHEVYGGEIPEVGDTDVPDPDIDM). A compositionally biased stretch (acidic residues) spans 15–28 (EVGDTDVPDPDIDM). A coiled-coil region spans residues 30-71 (AADEDAVTELAEMKRRLKEMEEEAAALREMQAKVEKEMGATQ). The interval 75–216 (SMAANQEGKE…FRRPMRYMPY (142 aa)) is necessary for homooligomerization. The region spanning 89 to 165 (RSVYVGNVDY…RQLKVSPKRT (77 aa)) is the RRM domain. The Nuclear localization signal motif lies at 162–169 (PKRTNVPG).

In terms of assembly, monomer and homooligomer. Binds RNA as a monomer and oligomerizes when bound to poly(A). Forms a complex with cleavage and polyadenylation specificity factor (CPSF) subunits PAPS4, PABN1, PABN2, CSTF50 and FIPS5. Interacts with CSP3.

It is found in the nucleus speckle. The protein localises to the cytoplasm. Its function is as follows. Involved in the 3'-end formation of mRNA precursors (pre-mRNA) by the addition of a poly(A) tail of 200-250 nt to the upstream cleavage product. Stimulates poly(A) polymerase (PAPOLA) conferring processivity on the poly(A) tail elongation reaction and also controls the poly(A) tail length. Increases the affinity of poly(A) polymerase for RNA. Binds to poly(A) and to poly(G) with high affinity. May protect the poly(A) tail from degradation. The protein is Polyadenylate-binding protein 3 of Arabidopsis thaliana (Mouse-ear cress).